Here is a 633-residue protein sequence, read N- to C-terminus: Extracellular metalloproteinase 3 (633 aa).

Residues 1–18 form the signal peptide; that stretch reads MHGLLLAGLLALPMNVLA. A propeptide spanning residues 19-246 is cleaved from the precursor; the sequence is YPAEQHASNV…VHNVVDYVAS (228 aa). A glycan (N-linked (GlcNAc...) asparagine) is linked at Asn410. His429 contacts Zn(2+). Glu430 is a catalytic residue. His433 provides a ligand contact to Zn(2+). N-linked (GlcNAc...) asparagine glycans are attached at residues Asn480 and Asn622.

It belongs to the peptidase M36 family. It depends on Zn(2+) as a cofactor.

It is found in the secreted. In terms of biological role, secreted metalloproteinase probably acting as a virulence factor. The sequence is that of Extracellular metalloproteinase 3 (MEP3) from Trichophyton rubrum (Athlete's foot fungus).